Here is a 112-residue protein sequence, read N- to C-terminus: UPF0235 protein RHE_CH03912 (112 aa).

It belongs to the UPF0235 family.

This chain is UPF0235 protein RHE_CH03912, found in Rhizobium etli (strain ATCC 51251 / DSM 11541 / JCM 21823 / NBRC 15573 / CFN 42).